We begin with the raw amino-acid sequence, 314 residues long: Lipoyl synthase (314 aa).

[4Fe-4S] cluster contacts are provided by Cys67, Cys72, Cys78, Cys93, Cys97, Cys100, and Ser306. A Radical SAM core domain is found at 79-295 (FNRGTATFMI…KNYALSIGFK (217 aa)).

The protein belongs to the radical SAM superfamily. Lipoyl synthase family. [4Fe-4S] cluster is required as a cofactor.

The protein localises to the cytoplasm. It carries out the reaction [[Fe-S] cluster scaffold protein carrying a second [4Fe-4S](2+) cluster] + N(6)-octanoyl-L-lysyl-[protein] + 2 oxidized [2Fe-2S]-[ferredoxin] + 2 S-adenosyl-L-methionine + 4 H(+) = [[Fe-S] cluster scaffold protein] + N(6)-[(R)-dihydrolipoyl]-L-lysyl-[protein] + 4 Fe(3+) + 2 hydrogen sulfide + 2 5'-deoxyadenosine + 2 L-methionine + 2 reduced [2Fe-2S]-[ferredoxin]. Its pathway is protein modification; protein lipoylation via endogenous pathway; protein N(6)-(lipoyl)lysine from octanoyl-[acyl-carrier-protein]: step 2/2. Catalyzes the radical-mediated insertion of two sulfur atoms into the C-6 and C-8 positions of the octanoyl moiety bound to the lipoyl domains of lipoate-dependent enzymes, thereby converting the octanoylated domains into lipoylated derivatives. The polypeptide is Lipoyl synthase (Buchnera aphidicola subsp. Baizongia pistaciae (strain Bp)).